The chain runs to 808 residues: Sucrose synthase 4 (808 aa).

The GT-B glycosyltransferase stretch occupies residues 277–754 (MVFNVVILSP…GLERIQEKYT (478 aa)).

It belongs to the glycosyltransferase 1 family. Plant sucrose synthase subfamily. As to expression, detected in the whole plant with highest expression in young rosette leaves and roots.

The catalysed reaction is an NDP-alpha-D-glucose + D-fructose = a ribonucleoside 5'-diphosphate + sucrose + H(+). Functionally, sucrose-cleaving enzyme that provides UDP-glucose and fructose for various metabolic pathways. This is Sucrose synthase 4 (SUS4) from Arabidopsis thaliana (Mouse-ear cress).